The sequence spans 526 residues: Thioredoxin reductase 2, mitochondrial (526 aa).

The N-terminal 36 residues, 1-36 (MAAIVAALRGSSGRFRPQTRVLTRGTRGAAGAASAA), are a transit peptide targeting the mitochondrion. 43-72 (DLLVIGGGSGGLACAKEAAQLGRKVAVADY) is an FAD binding site. The residue at position 81 (lysine 81) is an N6-succinyllysine. A disulfide bridge connects residues cysteine 88 and cysteine 93. Lysine 177 and lysine 331 each carry N6-succinyllysine. Histidine 499 (proton acceptor) is an active-site residue. The segment at residues 524–525 (CU) is a cross-link (cysteinyl-selenocysteine (Cys-Sec)). Selenocysteine 525 is a non-standard amino acid (selenocysteine).

Belongs to the class-I pyridine nucleotide-disulfide oxidoreductase family. Homodimer. Requires FAD as cofactor. As to expression, expressed in liver, kidney, adrenal gland and heart.

The protein resides in the mitochondrion. The catalysed reaction is [thioredoxin]-dithiol + NADP(+) = [thioredoxin]-disulfide + NADPH + H(+). Involved in the control of reactive oxygen species levels and the regulation of mitochondrial redox homeostasis. Maintains mitochondrial thioredoxin in a reduced state. May play a role in redox-regulated cell signaling. The sequence is that of Thioredoxin reductase 2, mitochondrial (Txnrd2) from Rattus norvegicus (Rat).